The following is a 292-amino-acid chain: Glutamyl-Q tRNA(Asp) synthetase (292 aa).

Residues 9–13 and Glu45 each bind L-glutamate; that span reads RFAPS. A 'HIGH' region motif is present at residues 12–22; the sequence is PSPSGPLHAGS. The Zn(2+) site is built by Cys99, Cys101, Tyr121, and Cys125. 2 residues coordinate L-glutamate: Tyr184 and Arg202. Residues 240 to 244 carry the 'KMSKS' region motif; the sequence is KLSKQ. Lys243 serves as a coordination point for ATP.

Belongs to the class-I aminoacyl-tRNA synthetase family. GluQ subfamily. The cofactor is Zn(2+).

Its function is as follows. Catalyzes the tRNA-independent activation of glutamate in presence of ATP and the subsequent transfer of glutamate onto a tRNA(Asp). Glutamate is transferred on the 2-amino-5-(4,5-dihydroxy-2-cyclopenten-1-yl) moiety of the queuosine in the wobble position of the QUC anticodon. The polypeptide is Glutamyl-Q tRNA(Asp) synthetase (Verminephrobacter eiseniae (strain EF01-2)).